A 227-amino-acid polypeptide reads, in one-letter code: 2,3-bisphosphoglycerate-dependent phosphoglycerate mutase (227 aa).

Residues 7–14 (RHGFSEWN), 20–21 (TG), arginine 59, 86–89 (ERHY), lysine 97, 113–114 (RR), and 182–183 (GN) contribute to the substrate site. Catalysis depends on histidine 8, which acts as the Tele-phosphohistidine intermediate. The Proton donor/acceptor role is filled by glutamate 86.

This sequence belongs to the phosphoglycerate mutase family. BPG-dependent PGAM subfamily. As to quaternary structure, homodimer.

It carries out the reaction (2R)-2-phosphoglycerate = (2R)-3-phosphoglycerate. It participates in carbohydrate degradation; glycolysis; pyruvate from D-glyceraldehyde 3-phosphate: step 3/5. In terms of biological role, catalyzes the interconversion of 2-phosphoglycerate and 3-phosphoglycerate. This is 2,3-bisphosphoglycerate-dependent phosphoglycerate mutase from Pasteurella multocida (strain Pm70).